The following is a 365-amino-acid chain: 2-aminoethylphosphonate--pyruvate transaminase (365 aa).

The residue at position 194 (lysine 194) is an N6-(pyridoxal phosphate)lysine.

This sequence belongs to the class-V pyridoxal-phosphate-dependent aminotransferase family. PhnW subfamily. As to quaternary structure, homodimer. Requires pyridoxal 5'-phosphate as cofactor.

It catalyses the reaction (2-aminoethyl)phosphonate + pyruvate = phosphonoacetaldehyde + L-alanine. In terms of biological role, involved in phosphonate degradation. In Bacillus cereus (strain 03BB102), this protein is 2-aminoethylphosphonate--pyruvate transaminase.